The sequence spans 246 residues: UPF0246 protein stu1967 (246 aa).

It belongs to the UPF0246 family.

The polypeptide is UPF0246 protein stu1967 (Streptococcus thermophilus (strain ATCC BAA-250 / LMG 18311)).